The primary structure comprises 138 residues: Small ribosomal subunit protein uS11c (138 aa).

The disordered stretch occupies residues 1–22 (MAKLLPRIGSRKNGRISSRKNA). Basic residues predominate over residues 9–22 (GSRKNGRISSRKNA).

The protein belongs to the universal ribosomal protein uS11 family. As to quaternary structure, part of the 30S ribosomal subunit.

Its subcellular location is the plastid. The protein localises to the chloroplast. This Populus alba (White poplar) protein is Small ribosomal subunit protein uS11c.